Here is a 224-residue protein sequence, read N- to C-terminus: UPF0173 metal-dependent hydrolase EAT1b_0495 (224 aa).

Belongs to the UPF0173 family.

The chain is UPF0173 metal-dependent hydrolase EAT1b_0495 from Exiguobacterium sp. (strain ATCC BAA-1283 / AT1b).